The sequence spans 472 residues: MAQGSGDQRAVGVADPEESSPNMIVYCKIEDIITKMQDDKTGGVPIRTVKSFLSKIPSVVTGTDIVQWLMKNLSIEDPVEAIHLGSLIAAQGYIFPISDHVLTMKDDGTFYRFQAPYFWPSNCWEPENTDYAIYLCKRTMQNKARLELADYEAENLARLQRAFARKWEFIFMQAEAQVKIDRKKDKTERKILDSQERAFWDVHRPVPGCVNTTEMDIRKCRRLKNPQKVKKSVYGVTEESQAQSPVHVLSQPIRKTTKEDIRKQITFLNAQIDRHCLKMSKVAESLIAYTEQYVEYDPLITPAEPSNPWISDDVALWDIEMSKEPSQQRVKRWGFSFDEILKDQVGRDQFLRFLESEFSSENLRFWLAVQDLKKQPLQDVAKRVEEIWQEFLAPGAPSAINLDSHSYEITSQNVKDGGRYTFEDAQEHIYKLMKSDSYARFLRSNAYQDLLLAKKKGKSLAGKRLTGLMQSS.

Positions 40–115 (KTGGVPIRTV…DDGTFYRFQA (76 aa)) constitute a DEP domain. The G protein gamma domain maps to 261-330 (IRKQITFLNA…MSKEPSQQRV (70 aa)). The region spanning 336 to 441 (SFDEILKDQV…LMKSDSYARF (106 aa)) is the RGS domain.

As to quaternary structure, interacts with GNB5. Interacts with RGS7BP, leading to regulate the subcellular location of the heterodimer formed with GNB5. Interacts with GNAI1.

It localises to the cytoplasm. Its subcellular location is the cytosol. The protein resides in the membrane. It is found in the nucleus. The protein localises to the cell membrane. Regulates G protein-coupled receptor signaling cascades. Inhibits signal transduction by increasing the GTPase activity of G protein alpha subunits, thereby driving them into their inactive GDP-bound form. The RGS6/GNB5 dimer enhances GNAO1 GTPase activity. The chain is Regulator of G-protein signaling 6 (RGS6) from Homo sapiens (Human).